Here is a 691-residue protein sequence, read N- to C-terminus: 1,4-alpha-glucan-branching enzyme (691 aa).

Residues Trp-80 and Lys-116 each contribute to the (1,4-alpha-D-glucosyl)n site. The active-site Nucleophile is the Asp-333. Glu-398 (proton donor) is an active-site residue.

It belongs to the glycosyl hydrolase 13 family. GlgB subfamily.

It is found in the cytoplasm. The enzyme catalyses Transfers a segment of a (1-&gt;4)-alpha-D-glucan chain to a primary hydroxy group in a similar glucan chain.. It functions in the pathway glycan biosynthesis; glycogen biosynthesis. Functionally, glycogen-branching enzyme participates in the glycogen biosynthetic process along with glycogenin and glycogen synthase. Generates alpha-1,6-glucosidic branches from alpha-1,4-linked glucose chains, to increase solubility of the glycogen polymer. This chain is 1,4-alpha-glucan-branching enzyme (GLC3), found in Yarrowia lipolytica (strain CLIB 122 / E 150) (Yeast).